Consider the following 430-residue polypeptide: Probable histidine--tRNA ligase, cytoplasmic (430 aa).

Belongs to the class-II aminoacyl-tRNA synthetase family.

It is found in the cytoplasm. It carries out the reaction tRNA(His) + L-histidine + ATP = L-histidyl-tRNA(His) + AMP + diphosphate + H(+). The sequence is that of Probable histidine--tRNA ligase, cytoplasmic from Vairimorpha ceranae (strain BRL01) (Microsporidian parasite).